The chain runs to 544 residues: DNA mismatch repair protein MutL (544 aa).

This sequence belongs to the DNA mismatch repair MutL/HexB family.

Functionally, this protein is involved in the repair of mismatches in DNA. It is required for dam-dependent methyl-directed DNA mismatch repair. May act as a 'molecular matchmaker', a protein that promotes the formation of a stable complex between two or more DNA-binding proteins in an ATP-dependent manner without itself being part of a final effector complex. This chain is DNA mismatch repair protein MutL, found in Thermodesulfovibrio yellowstonii (strain ATCC 51303 / DSM 11347 / YP87).